The primary structure comprises 1407 residues: DNA-directed RNA polymerase subunit beta' (1407 aa).

Zn(2+) is bound by residues cysteine 70, cysteine 72, cysteine 85, and cysteine 88. Mg(2+) contacts are provided by aspartate 458, aspartate 460, and aspartate 462. Residues cysteine 814, cysteine 888, cysteine 895, and cysteine 898 each coordinate Zn(2+).

Belongs to the RNA polymerase beta' chain family. As to quaternary structure, the RNAP catalytic core consists of 2 alpha, 1 beta, 1 beta' and 1 omega subunit. When a sigma factor is associated with the core the holoenzyme is formed, which can initiate transcription. Mg(2+) serves as cofactor. Requires Zn(2+) as cofactor.

It carries out the reaction RNA(n) + a ribonucleoside 5'-triphosphate = RNA(n+1) + diphosphate. Its function is as follows. DNA-dependent RNA polymerase catalyzes the transcription of DNA into RNA using the four ribonucleoside triphosphates as substrates. This chain is DNA-directed RNA polymerase subunit beta', found in Leptothrix cholodnii (strain ATCC 51168 / LMG 8142 / SP-6) (Leptothrix discophora (strain SP-6)).